A 99-amino-acid chain; its full sequence is UPF0473 protein Athe_1150 (99 aa).

The protein belongs to the UPF0473 family.

In Caldicellulosiruptor bescii (strain ATCC BAA-1888 / DSM 6725 / KCTC 15123 / Z-1320) (Anaerocellum thermophilum), this protein is UPF0473 protein Athe_1150.